Here is an 801-residue protein sequence, read N- to C-terminus: Mitochondrial intermediate peptidase (801 aa).

The transit peptide at 1–41 directs the protein to the mitochondrion; that stretch reads MKDQLLVPLRRRPWTCQKCLQRLQLPRHQTRRSFETAASPF. His564 lines the Zn(2+) pocket. Residue Glu565 is part of the active site. Zn(2+) contacts are provided by His568 and His571.

This sequence belongs to the peptidase M3 family. Zn(2+) serves as cofactor.

Its subcellular location is the mitochondrion matrix. It carries out the reaction Release of an N-terminal octapeptide as second stage of processing of some proteins imported into the mitochondrion.. In terms of biological role, cleaves proteins, imported into the mitochondrion, to their mature size. While most mitochondrial precursor proteins are processed to the mature form in one step by mitochondrial processing peptidase (MPP), the sequential cleavage by MIP of an octapeptide after initial processing by MPP is a required step for a subgroup of nuclear-encoded precursor proteins destined for the matrix or the inner membrane. In Aspergillus fumigatus (strain ATCC MYA-4609 / CBS 101355 / FGSC A1100 / Af293) (Neosartorya fumigata), this protein is Mitochondrial intermediate peptidase (oct1).